The sequence spans 307 residues: Transcription initiation factor IIB 2 (307 aa).

The TFIIB-type zinc-finger motif lies at 7–38 (TPKRCPECNSEHLIRDYEHGELICADCGAVIE). Residues cysteine 11, cysteine 14, cysteine 30, and cysteine 33 each coordinate Zn(2+). 2 consecutive repeat copies span residues 124-207 (QLLN…AKEL) and 218-299 (SYIS…EISK).

The protein belongs to the TFIIB family.

In terms of biological role, stabilizes TBP binding to an archaeal box-A promoter. Also responsible for recruiting RNA polymerase II to the pre-initiation complex (DNA-TBP-TFIIB). The chain is Transcription initiation factor IIB 2 from Thermoplasma acidophilum (strain ATCC 25905 / DSM 1728 / JCM 9062 / NBRC 15155 / AMRC-C165).